Reading from the N-terminus, the 336-residue chain is Acetyl-coenzyme A carboxylase carboxyl transferase subunit beta (336 aa).

Residues 27–297 enclose the CoA carboxyltransferase N-terminal domain; sequence LWTKCESCQG…VAPAPAPAAT (271 aa). 4 residues coordinate Zn(2+): C31, C34, C50, and C53. A C4-type zinc finger spans residues 31–53; sequence CESCQGILYRPDLERNLEVCPKC. Positions 287-336 are disordered; the sequence is SVAPAPAPAATVDPEPESAEPEAPAEEAGPAGAAGDQAGESQDEGDPRNA. Positions 300–311 are enriched in acidic residues; it reads PEPESAEPEAPA. A compositionally biased stretch (low complexity) spans 312-326; that stretch reads EEAGPAGAAGDQAGE.

Belongs to the AccD/PCCB family. Acetyl-CoA carboxylase is a heterohexamer composed of biotin carboxyl carrier protein (AccB), biotin carboxylase (AccC) and two subunits each of ACCase subunit alpha (AccA) and ACCase subunit beta (AccD). It depends on Zn(2+) as a cofactor.

Its subcellular location is the cytoplasm. It catalyses the reaction N(6)-carboxybiotinyl-L-lysyl-[protein] + acetyl-CoA = N(6)-biotinyl-L-lysyl-[protein] + malonyl-CoA. It functions in the pathway lipid metabolism; malonyl-CoA biosynthesis; malonyl-CoA from acetyl-CoA: step 1/1. In terms of biological role, component of the acetyl coenzyme A carboxylase (ACC) complex. Biotin carboxylase (BC) catalyzes the carboxylation of biotin on its carrier protein (BCCP) and then the CO(2) group is transferred by the transcarboxylase to acetyl-CoA to form malonyl-CoA. The protein is Acetyl-coenzyme A carboxylase carboxyl transferase subunit beta of Halorhodospira halophila (strain DSM 244 / SL1) (Ectothiorhodospira halophila (strain DSM 244 / SL1)).